Reading from the N-terminus, the 338-residue chain is DNA-directed RNA polymerase I subunit RPA43 (338 aa).

Residues 209-338 (EVSEEVTENG…PKRKGKSNFL (130 aa)) form a disordered region. Ser242, Ser304, and Ser316 each carry phosphoserine. Thr322 is modified (phosphothreonine). At Ser328 the chain carries Phosphoserine. A compositionally biased stretch (basic residues) spans 328-338 (SPKRKGKSNFL).

Belongs to the eukaryotic RPA43 RNA polymerase subunit family. Component of the RNA polymerase I (Pol I) complex consisting of 13 subunits: a ten-subunit catalytic core composed of POLR1A/RPA1, POLR1B/RPA2, POLR1C/RPAC1, POLR1D/RPAC2, POLR1H/RPA12, POLR2E/RPABC1, POLR2F/RPABC2, POLR2H/RPABC3, POLR2K/RPABC4 and POLR2L/RPABC5; a mobile stalk subunit POLR1F/RPA43 protruding from the core and additional subunits homologous to general transcription factors POLR1E/RPA49 and POLR1G/RPA34. Interacts with RRN3/TIF-IA. As to expression, widely expressed. Expressed in all fetal and adult tissues tested, with highest expression in fetal lung, liver, and kidney, and low expression in all adult tissues.

It localises to the nucleus. The protein resides in the nucleolus. Functionally, component of RNA polymerase I (Pol I), a DNA-dependent RNA polymerase which synthesizes ribosomal RNA precursors using the four ribonucleoside triphosphates as substrates. Through its association with RRN3/TIF-IA may be involved in recruitment of Pol I to rDNA promoters. The polypeptide is DNA-directed RNA polymerase I subunit RPA43 (Homo sapiens (Human)).